Reading from the N-terminus, the 516-residue chain is Bifunctional purine biosynthesis protein PurH (516 aa).

Residues 1 to 150 enclose the MGS-like domain; the sequence is MSDDRKQIKR…KNHPSVAVVV (150 aa).

It belongs to the PurH family.

It catalyses the reaction (6R)-10-formyltetrahydrofolate + 5-amino-1-(5-phospho-beta-D-ribosyl)imidazole-4-carboxamide = 5-formamido-1-(5-phospho-D-ribosyl)imidazole-4-carboxamide + (6S)-5,6,7,8-tetrahydrofolate. The enzyme catalyses IMP + H2O = 5-formamido-1-(5-phospho-D-ribosyl)imidazole-4-carboxamide. Its pathway is purine metabolism; IMP biosynthesis via de novo pathway; 5-formamido-1-(5-phospho-D-ribosyl)imidazole-4-carboxamide from 5-amino-1-(5-phospho-D-ribosyl)imidazole-4-carboxamide (10-formyl THF route): step 1/1. It participates in purine metabolism; IMP biosynthesis via de novo pathway; IMP from 5-formamido-1-(5-phospho-D-ribosyl)imidazole-4-carboxamide: step 1/1. The protein is Bifunctional purine biosynthesis protein PurH of Corynebacterium ammoniagenes (Brevibacterium ammoniagenes).